Consider the following 336-residue polypeptide: Dihydroorotate dehydrogenase (quinone) (336 aa).

FMN contacts are provided by residues 62–66 and Thr-86; that span reads AGMDK. Lys-66 is a substrate binding site. 111-115 provides a ligand contact to substrate; that stretch reads NRMGF. FMN is bound by residues Asn-139 and Asn-172. A substrate-binding site is contributed by Asn-172. Residue Ser-175 is the Nucleophile of the active site. Asn-177 contacts substrate. 2 residues coordinate FMN: Lys-217 and Thr-245. 246–247 contributes to the substrate binding site; that stretch reads NT. Residues Gly-268, Gly-297, and 318 to 319 each bind FMN; that span reads YS.

This sequence belongs to the dihydroorotate dehydrogenase family. Type 2 subfamily. In terms of assembly, monomer. Requires FMN as cofactor.

It is found in the cell membrane. It catalyses the reaction (S)-dihydroorotate + a quinone = orotate + a quinol. The protein operates within pyrimidine metabolism; UMP biosynthesis via de novo pathway; orotate from (S)-dihydroorotate (quinone route): step 1/1. In terms of biological role, catalyzes the conversion of dihydroorotate to orotate with quinone as electron acceptor. In Buchnera aphidicola subsp. Schizaphis graminum (strain Sg), this protein is Dihydroorotate dehydrogenase (quinone).